A 544-amino-acid polypeptide reads, in one-letter code: Phosphoacetylglucosamine mutase (544 aa).

The active-site Phosphoserine intermediate is serine 66. The Mg(2+) site is built by serine 66, aspartate 290, aspartate 292, and aspartate 294. Residues 387–389 (EAN), 512–516 (RASGT), and arginine 521 contribute to the substrate site.

Belongs to the phosphohexose mutase family. Mg(2+) is required as a cofactor.

It catalyses the reaction N-acetyl-alpha-D-glucosamine 1-phosphate = N-acetyl-D-glucosamine 6-phosphate. It participates in nucleotide-sugar biosynthesis; UDP-N-acetyl-alpha-D-glucosamine biosynthesis; N-acetyl-alpha-D-glucosamine 1-phosphate from alpha-D-glucosamine 6-phosphate (route I): step 2/2. Catalyzes the conversion of GlcNAc-6-P into GlcNAc-1-P during the synthesis of uridine diphosphate/UDP-GlcNAc, which is a biosynthetic precursor of chitin and also supplies the amino sugars for N-linked oligosaccharides of glycoproteins. This chain is Phosphoacetylglucosamine mutase, found in Candida albicans (Yeast).